Here is a 444-residue protein sequence, read N- to C-terminus: UDP-N-acetylmuramoylalanine--D-glutamate ligase (444 aa).

109–115 (GSNGKTT) contributes to the ATP binding site.

Belongs to the MurCDEF family.

The protein localises to the cytoplasm. The enzyme catalyses UDP-N-acetyl-alpha-D-muramoyl-L-alanine + D-glutamate + ATP = UDP-N-acetyl-alpha-D-muramoyl-L-alanyl-D-glutamate + ADP + phosphate + H(+). Its pathway is cell wall biogenesis; peptidoglycan biosynthesis. Functionally, cell wall formation. Catalyzes the addition of glutamate to the nucleotide precursor UDP-N-acetylmuramoyl-L-alanine (UMA). This Bacteroides fragilis (strain ATCC 25285 / DSM 2151 / CCUG 4856 / JCM 11019 / LMG 10263 / NCTC 9343 / Onslow / VPI 2553 / EN-2) protein is UDP-N-acetylmuramoylalanine--D-glutamate ligase.